Consider the following 156-residue polypeptide: Ribosome maturation factor RimP (156 aa).

The protein belongs to the RimP family.

Its subcellular location is the cytoplasm. Its function is as follows. Required for maturation of 30S ribosomal subunits. In Dictyoglomus turgidum (strain DSM 6724 / Z-1310), this protein is Ribosome maturation factor RimP.